A 381-amino-acid polypeptide reads, in one-letter code: ADP,ATP carrier protein 1, mitochondrial (381 aa).

Residues Met1–Gln70 constitute a mitochondrion transit peptide. Solcar repeat units lie at residues Thr78–Leu171, Lys183–Val276, and Asp284–Ile370. 5 helical membrane passes run Phe80 to Leu107, Thr148 to Phe172, Tyr181 to Leu201, Phe252 to Val273, and Phe287 to Ile307. The ADP site is built by Arg153 and Lys165. Arg311 contacts ADP. Residues Arg311–Met316 are important for transport activity. A Nucleotide carrier signature motif motif is present at residues Arg311–Met316. A helical transmembrane segment spans residues Ala347–Leu367.

It belongs to the mitochondrial carrier (TC 2.A.29) family. Monomer.

Its subcellular location is the mitochondrion inner membrane. It carries out the reaction ADP(in) + ATP(out) = ADP(out) + ATP(in). The matrix-open state (m-state) is inhibited by the membrane-permeable bongkrekic acid (BKA). The cytoplasmic-open state (c-state) is inhibited by the membrane-impermeable toxic inhibitor carboxyatractyloside (CATR). Functionally, ADP:ATP antiporter that mediates import of ADP into the mitochondrial matrix for ATP synthesis, and export of ATP out to fuel the cell. Cycles between the cytoplasmic-open state (c-state) and the matrix-open state (m-state): operates by the alternating access mechanism with a single substrate-binding site intermittently exposed to either the cytosolic (c-state) or matrix (m-state) side of the inner mitochondrial membrane. The chain is ADP,ATP carrier protein 1, mitochondrial (AAC1) from Arabidopsis thaliana (Mouse-ear cress).